Reading from the N-terminus, the 106-residue chain is UPF0145 protein Dhaf_3855 (106 aa).

Belongs to the UPF0145 family.

This Desulfitobacterium hafniense (strain DSM 10664 / DCB-2) protein is UPF0145 protein Dhaf_3855.